A 118-amino-acid polypeptide reads, in one-letter code: MISKPDKNKTRQKRHARVRGKISGTAECPRLNVYRSNKNIYAQVIDDVAGVTLVSASTLDSEVSGNTKTEQASSVGAVVAKRAVEKGIKEVVFDRGGYLYHGRVQALAEAARENGLDF.

It belongs to the universal ribosomal protein uL18 family. In terms of assembly, part of the 50S ribosomal subunit; part of the 5S rRNA/L5/L18/L25 subcomplex. Contacts the 5S and 23S rRNAs.

Its function is as follows. This is one of the proteins that bind and probably mediate the attachment of the 5S RNA into the large ribosomal subunit, where it forms part of the central protuberance. This is Large ribosomal subunit protein uL18 from Ligilactobacillus salivarius (strain UCC118) (Lactobacillus salivarius).